The chain runs to 221 residues: Iron-sulfur cluster repair protein YtfE (221 aa).

This sequence belongs to the RIC family. YtfE subfamily. In terms of assembly, homodimer.

The protein resides in the cytoplasm. Functionally, di-iron-containing protein involved in the repair of iron-sulfur clusters damaged by oxidative and nitrosative stress conditions. This Pectobacterium atrosepticum (strain SCRI 1043 / ATCC BAA-672) (Erwinia carotovora subsp. atroseptica) protein is Iron-sulfur cluster repair protein YtfE.